Consider the following 393-residue polypeptide: 6-hydroxy-3-succinoylpyridine 3-monooxygenase HspB (393 aa).

FAD-binding positions include 6–35 (RVII…VLEA) and 277–287 (MRNGRVILIGD).

Belongs to the PheA/TfdB FAD monooxygenase family. In terms of assembly, homodimer. The cofactor is FAD.

It catalyses the reaction 4-(6-hydroxypyridin-3-yl)-4-oxobutanoate + 2 NADH + O2 + 2 H(+) = 2,5-dihydroxypyridine + succinate semialdehyde + 2 NAD(+) + H2O. The protein operates within alkaloid degradation; nicotine degradation. Its activity is regulated as follows. Inhibited by Cu(2+) and Zn(2+). Its function is as follows. Involved in the nicotine degradation. Catalyzes the cleavage of 6-hydroxy-3-succinoylpyridine (HSP) by incorporation of oxygen at the 3-position to produce to 2,5-dihydroxypyridine (DHP) and succinic semialdehyde. This chain is 6-hydroxy-3-succinoylpyridine 3-monooxygenase HspB, found in Pseudomonas putida (strain DSM 28022 / S16).